Here is a 238-residue protein sequence, read N- to C-terminus: Dolichyldiphosphatase 1 (238 aa).

The next 4 helical transmembrane spans lie at 33 to 53, 100 to 120, 130 to 150, and 162 to 182; these read LAYL…LIIF, PSSH…FLYL, FLDL…AFLV, and WSQV…WFIF.

This sequence belongs to the dolichyldiphosphatase family.

The protein resides in the endoplasmic reticulum membrane. It catalyses the reaction a di-trans,poly-cis-dolichyl diphosphate + H2O = a di-trans,poly-cis-dolichyl phosphate + phosphate + H(+). It participates in protein modification; protein glycosylation. Required for efficient N-glycosylation. Necessary for maintaining optimal levels of dolichol-linked oligosaccharides. Hydrolyzes dolichyl pyrophosphate at a very high rate and dolichyl monophosphate at a much lower rate. Does not act on phosphatidate. In Homo sapiens (Human), this protein is Dolichyldiphosphatase 1 (DOLPP1).